A 1545-amino-acid polypeptide reads, in one-letter code: Pentafunctional AROM polypeptide (1545 aa).

The interval 1 to 383 (MSGLIEKVSI…YEPKASYVND (383 aa)) is 3-dehydroquinate synthase. Residues 44–46 (DSN), 82–85 (EANK), 113–115 (GGV), and aspartate 118 each bind NAD(+). 7-phospho-2-dehydro-3-deoxy-D-arabino-heptonate is bound at residue arginine 129. 138–139 (TS) lines the NAD(+) pocket. 7-phospho-2-dehydro-3-deoxy-D-arabino-heptonate is bound by residues aspartate 145 and lysine 151. Lysine 160 contributes to the NAD(+) binding site. Asparagine 161 lines the 7-phospho-2-dehydro-3-deoxy-D-arabino-heptonate pocket. NAD(+) contacts are provided by residues 178–181 (FLET) and asparagine 189. Residue glutamate 193 participates in Zn(2+) binding. Residues 193-196 (EVVK) and lysine 249 each bind 7-phospho-2-dehydro-3-deoxy-D-arabino-heptonate. The active-site Proton acceptor; for 3-dehydroquinate synthase activity is the glutamate 259. 7-phospho-2-dehydro-3-deoxy-D-arabino-heptonate contacts are provided by residues 263 to 267 (RNLLN) and histidine 270. Residue histidine 270 participates in Zn(2+) binding. Catalysis depends on histidine 274, which acts as the Proton acceptor; for 3-dehydroquinate synthase activity. 7-phospho-2-dehydro-3-deoxy-D-arabino-heptonate contacts are provided by histidine 286 and lysine 355. Residue histidine 286 coordinates Zn(2+). The tract at residues 396 to 840 (VKDFNSAPST…WDILHTTFNV (445 aa)) is EPSP synthase. The active-site For EPSP synthase activity is the cysteine 822. The interval 859–1049 (DKSIIVIGMR…IPNGRSAFVC (191 aa)) is shikimate kinase. Residue 866 to 873 (GMRAAGKS) coordinates ATP. The segment at 1050–1261 (LTYEDLAPVS…AAPGQLTLKE (212 aa)) is 3-dehydroquinase. Residue histidine 1166 is the Proton acceptor; for 3-dehydroquinate dehydratase activity of the active site. The active-site Schiff-base intermediate with substrate; for 3-dehydroquinate dehydratase activity is the lysine 1195. Residues 1274–1545 (RKKFYIVGKP…GYQFSSHIDL (272 aa)) form a shikimate dehydrogenase region.

The protein in the N-terminal section; belongs to the sugar phosphate cyclases superfamily. Dehydroquinate synthase family. It in the 2nd section; belongs to the EPSP synthase family. In the 3rd section; belongs to the shikimate kinase family. This sequence in the 4th section; belongs to the type-I 3-dehydroquinase family. The protein in the C-terminal section; belongs to the shikimate dehydrogenase family. In terms of assembly, homodimer. Zn(2+) serves as cofactor.

Its subcellular location is the cytoplasm. It catalyses the reaction 7-phospho-2-dehydro-3-deoxy-D-arabino-heptonate = 3-dehydroquinate + phosphate. The catalysed reaction is 3-dehydroquinate = 3-dehydroshikimate + H2O. It carries out the reaction shikimate + NADP(+) = 3-dehydroshikimate + NADPH + H(+). The enzyme catalyses shikimate + ATP = 3-phosphoshikimate + ADP + H(+). It catalyses the reaction 3-phosphoshikimate + phosphoenolpyruvate = 5-O-(1-carboxyvinyl)-3-phosphoshikimate + phosphate. It functions in the pathway metabolic intermediate biosynthesis; chorismate biosynthesis; chorismate from D-erythrose 4-phosphate and phosphoenolpyruvate: step 2/7. Its pathway is metabolic intermediate biosynthesis; chorismate biosynthesis; chorismate from D-erythrose 4-phosphate and phosphoenolpyruvate: step 3/7. It participates in metabolic intermediate biosynthesis; chorismate biosynthesis; chorismate from D-erythrose 4-phosphate and phosphoenolpyruvate: step 4/7. The protein operates within metabolic intermediate biosynthesis; chorismate biosynthesis; chorismate from D-erythrose 4-phosphate and phosphoenolpyruvate: step 5/7. It functions in the pathway metabolic intermediate biosynthesis; chorismate biosynthesis; chorismate from D-erythrose 4-phosphate and phosphoenolpyruvate: step 6/7. The AROM polypeptide catalyzes 5 consecutive enzymatic reactions in prechorismate polyaromatic amino acid biosynthesis. This chain is Pentafunctional AROM polypeptide, found in Komagataella phaffii (strain GS115 / ATCC 20864) (Yeast).